Consider the following 331-residue polypeptide: MQKFLSLIIVILILYNIVKLKISPDNNNPTTIEQTASNNSSTDENQTSINNEPHISLNGNLFERTVSKIVINALKTEEGKAFFENILQPLNGPINPNDYTIEVRKDLVKTLFKINTLGSGNIGPASCGHVVTVFYQISDMNNTLISEDTKTFTLGSAPVMLGLDNVIIGMMVGEAREAIIPAKYAVNNSKNIIFDDAYNYKVNVILKSILPQNFVKNNEVKIYDDEIAYRVPLLCGEKVSFNAKITRLSNGKILYDSKAKGQQIDMKIGDITYPLIFSYALQGKVTVGTRSVIAEGKTFKALGSNINKIISHESLPINEYLLLELGDFKQN.

The tract at residues 28–50 is disordered; the sequence is NPTTIEQTASNNSSTDENQTSIN. One can recognise a PPIase FKBP-type domain in the interval 128 to 226; that stretch reads GHVVTVFYQI…NNEVKIYDDE (99 aa).

It carries out the reaction [protein]-peptidylproline (omega=180) = [protein]-peptidylproline (omega=0). The polypeptide is Putative peptidyl-prolyl cis-trans isomerase RF_0616 (Rickettsia felis (strain ATCC VR-1525 / URRWXCal2) (Rickettsia azadi)).